We begin with the raw amino-acid sequence, 741 residues long: Mitofusin-1 (741 aa).

The Cytoplasmic portion of the chain corresponds to 1–584 (MAETVSPLKH…AAQEELMITL (584 aa)). Residues 9 to 73 (KHFVLAKKAI…LAVIGEVLSR (65 aa)) form a part of a helix bundle domain, formed by helices from N-terminal and C-terminal regions region. In terms of domain architecture, Dynamin-type G spans 72–321 (SRRHMKVAFF…ARLQEFQNFE (250 aa)). The G1 motif stretch occupies residues 82–89 (GRTSSGKS). Residue 85 to 90 (SSGKSS) coordinates GTP. A G2 motif region spans residues 108 to 109 (TT). Residues 178–181 (DSPG) are G3 motif. 237 to 240 (NRWD) contributes to the GTP binding site. The segment at 237 to 240 (NRWD) is G4 motif. Residue glutamate 266 is a region of interest, G5 motif. GTP is bound by residues serine 284 and lysine 286. The segment at 338-364 (EQHTIRAKQILDTVKNILDSVNVAAAE) is part of a helix bundle domain, formed by helices from N-terminal and C-terminal regions. A coiled-coil region spans residues 371–408 (EEREDQIDRLDFIRNQMNLLTLDVKKKIKEVTEEVANK). Residues 585–605 (ITGLASLTSRTSMGIIVVGGV) form a helical membrane-spanning segment. Over 606 to 608 (IWK) the chain is Mitochondrial intermembrane. The helical transmembrane segment at 609 to 629 (TVGWKLISVTLSMYGALYLYE) threads the bilayer. Topologically, residues 630–741 (RLTWTTRAKE…QFLHPSSGES (112 aa)) are cytoplasmic. Residues 677–735 (FARLCQQVDVTQKHLEEEIARLSKEIDQLEKIQNNSKLLRNKAVQLESELENFSKQFLH) adopt a coiled-coil conformation. A part of a helix bundle domain, formed by helices from N-terminal and C-terminal regions region spans residues 703–734 (DQLEKIQNNSKLLRNKAVQLESELENFSKQFL).

It belongs to the TRAFAC class dynamin-like GTPase superfamily. Dynamin/Fzo/YdjA family. Mitofusin subfamily. In terms of assembly, homodimer, also in the absence of bound GTP. Forms higher oligomers in the presence of a transition state GTP analog. Forms homomultimers and heteromultimers with MFN2. Oligomerization is essential for mitochondrion fusion. Component of a high molecular weight multiprotein complex. Interacts with VAT1. Interacts with THG1L; THG1L probably functions as a guanyl-nucleotide exchange factor/GEF, activating MFN1. In terms of processing, ubiquitinated by MARCHF5. When mitochondria are depolarized and dysfunctional, it is ubiquitinated by a SCF (SKP1-CUL1-F-box protein) E3 ubiquitin-protein ligase complex that contains FBXO7 and PRKN. Ubiquitinated by non-degradative ubiquitin by PRKN, promoting mitochondrial fusion; deubiquitination by USP30 inhibits mitochondrial fusion. In terms of tissue distribution, detected in adult heart. Detected in embryos (at protein level). Widely expressed.

The protein localises to the mitochondrion outer membrane. It catalyses the reaction GTP + H2O = GDP + phosphate + H(+). Its function is as follows. Mitochondrial outer membrane GTPase that mediates mitochondrial clustering and fusion. Membrane clustering requires GTPase activity. It may involve a major rearrangement of the coiled coil domains. Mitochondria are highly dynamic organelles, and their morphology is determined by the equilibrium between mitochondrial fusion and fission events. Overexpression induces the formation of mitochondrial networks (in vitro). Has low GTPase activity. This is Mitofusin-1 (Mfn1) from Mus musculus (Mouse).